A 269-amino-acid polypeptide reads, in one-letter code: Energy-coupling factor transporter ATP-binding protein EcfA1 (269 aa).

Residues 8 to 242 form the ABC transporter domain; sequence IEFKDVSFQY…EEALISVGLD (235 aa). Residue 42 to 49 participates in ATP binding; it reads GHNGSGKS.

Belongs to the ABC transporter superfamily. Energy-coupling factor EcfA family. As to quaternary structure, forms a stable energy-coupling factor (ECF) transporter complex composed of 2 membrane-embedded substrate-binding proteins (S component), 2 ATP-binding proteins (A component) and 2 transmembrane proteins (T component).

Its subcellular location is the cell membrane. ATP-binding (A) component of a common energy-coupling factor (ECF) ABC-transporter complex. Unlike classic ABC transporters this ECF transporter provides the energy necessary to transport a number of different substrates. In Staphylococcus epidermidis (strain ATCC 35984 / DSM 28319 / BCRC 17069 / CCUG 31568 / BM 3577 / RP62A), this protein is Energy-coupling factor transporter ATP-binding protein EcfA1.